The chain runs to 502 residues: Aspartyl/glutamyl-tRNA(Asn/Gln) amidotransferase subunit B (502 aa).

It belongs to the GatB/GatE family. GatB subfamily. In terms of assembly, heterotrimer of A, B and C subunits.

It carries out the reaction L-glutamyl-tRNA(Gln) + L-glutamine + ATP + H2O = L-glutaminyl-tRNA(Gln) + L-glutamate + ADP + phosphate + H(+). The catalysed reaction is L-aspartyl-tRNA(Asn) + L-glutamine + ATP + H2O = L-asparaginyl-tRNA(Asn) + L-glutamate + ADP + phosphate + 2 H(+). Allows the formation of correctly charged Asn-tRNA(Asn) or Gln-tRNA(Gln) through the transamidation of misacylated Asp-tRNA(Asn) or Glu-tRNA(Gln) in organisms which lack either or both of asparaginyl-tRNA or glutaminyl-tRNA synthetases. The reaction takes place in the presence of glutamine and ATP through an activated phospho-Asp-tRNA(Asn) or phospho-Glu-tRNA(Gln). This Brucella suis (strain ATCC 23445 / NCTC 10510) protein is Aspartyl/glutamyl-tRNA(Asn/Gln) amidotransferase subunit B.